The chain runs to 154 residues: UPF0756 membrane protein BPUM_2558 (154 aa).

4 helical membrane-spanning segments follow: residues 8–28 (FLVL…ILAV), 54–74 (WGVT…DIGF), 87–107 (WIAL…IVLL), and 117–137 (LVFG…GPLI).

It belongs to the UPF0756 family.

The protein resides in the cell membrane. The chain is UPF0756 membrane protein BPUM_2558 from Bacillus pumilus (strain SAFR-032).